Consider the following 259-residue polypeptide: Haloacid dehalogenase-like hydrolase domain-containing protein 2 (259 aa).

Positions 13 and 15 each coordinate Mg(2+). Substrate-binding positions include 13-15 (DLN) and 46-47 (TN). A coiled-coil region spans residues 47–72 (NTTKESKKDLLERLKKLEFEISEDEI). Lys50 is modified (N6-succinyllysine). Lys179 provides a ligand contact to substrate. Residue Asp204 coordinates Mg(2+).

Belongs to the HAD-like hydrolase superfamily. It depends on Mg(2+) as a cofactor.

The protein is Haloacid dehalogenase-like hydrolase domain-containing protein 2 (Hdhd2) of Mus musculus (Mouse).